Consider the following 108-residue polypeptide: MSIISSLTNAGRGVVNTVGGAAQGINSVKSSADRNIALTKNTGSTDSIDATRSSISKGDAPSAELDGTANEENGLLRETSMLAGFEDKKEALSNQIVASKIRNSVVQF.

The segment covering 41-56 has biased composition (polar residues); it reads NTGSTDSIDATRSSIS. Positions 41-73 are disordered; sequence NTGSTDSIDATRSSISKGDAPSAELDGTANEEN.

This sequence belongs to the HrpA type 1 family.

It is found in the secreted. The protein resides in the fimbrium. Its function is as follows. Major structural protein of the hrp pilus, which is a component of the type III secretion system (T3SS, Hrp secretion system) required for effector protein delivery, parasitism, and pathogenicity. The hrp pilus functions as a conduit for protein delivery into the host cell. Also, affects the expression of T3SS-associated genes. Required for full expression of genes that encode regulatory, secretion, and effector proteins of the T3SS. HrpA-mediated gene regulation apparently is through effect on the mRNA level of hrpR and hrpS. The protein is Hrp pili protein HrpA (hrpA) of Pseudomonas savastanoi pv. glycinea (Pseudomonas syringae pv. glycinea).